Here is a 127-residue protein sequence, read N- to C-terminus: Fluoride-specific ion channel FluC (127 aa).

4 helical membrane passes run 4–24 (IMLAVFLGGGTGSVLRWWLGL), 35–55 (VGTLTANLAGAFIIGAGLAWF), 71–91 (TGLCGGLTTFSTFSAEVVFLL), and 101–121 (LNVALNLFGSFMMTALAFWLF). Gly-75 and Thr-78 together coordinate Na(+).

This sequence belongs to the fluoride channel Fluc/FEX (TC 1.A.43) family.

It is found in the cell inner membrane. It catalyses the reaction fluoride(in) = fluoride(out). With respect to regulation, na(+) is not transported, but it plays an essential structural role and its presence is essential for fluoride channel function. Fluoride-specific ion channel. Important for reducing fluoride concentration in the cell, thus reducing its toxicity. This is Fluoride-specific ion channel FluC from Cronobacter sakazakii (strain ATCC BAA-894) (Enterobacter sakazakii).